A 399-amino-acid chain; its full sequence is Probable protein phosphatase 2C 28 (399 aa).

The PPM-type phosphatase domain occupies 48 to 356 (EFSMAVVQAN…DDITVIVVFL (309 aa)). D87, G88, D288, and D347 together coordinate Mn(2+).

Belongs to the PP2C family. Requires Mg(2+) as cofactor. It depends on Mn(2+) as a cofactor.

It carries out the reaction O-phospho-L-seryl-[protein] + H2O = L-seryl-[protein] + phosphate. The enzyme catalyses O-phospho-L-threonyl-[protein] + H2O = L-threonyl-[protein] + phosphate. The polypeptide is Probable protein phosphatase 2C 28 (Oryza sativa subsp. japonica (Rice)).